Consider the following 693-residue polypeptide: Methionine--tRNA ligase (693 aa).

The 'HIGH' region signature appears at 12–22 (PYANGPLHLGH). 4 residues coordinate Zn(2+): Cys-143, Cys-146, Cys-156, and Cys-159. Residues 330 to 334 (KMSKS) carry the 'KMSKS' region motif. An ATP-binding site is contributed by Lys-333. The disordered stretch occupies residues 557–576 (APTAKNEAAKPAAPAAAKTE). In terms of domain architecture, tRNA-binding spans 590-693 (DFAKLDLRIG…SGAQPGMPVR (104 aa)).

The protein belongs to the class-I aminoacyl-tRNA synthetase family. MetG type 1 subfamily. Homodimer. Requires Zn(2+) as cofactor.

Its subcellular location is the cytoplasm. The catalysed reaction is tRNA(Met) + L-methionine + ATP = L-methionyl-tRNA(Met) + AMP + diphosphate. Functionally, is required not only for elongation of protein synthesis but also for the initiation of all mRNA translation through initiator tRNA(fMet) aminoacylation. This is Methionine--tRNA ligase from Stenotrophomonas maltophilia (strain R551-3).